Here is a 197-residue protein sequence, read N- to C-terminus: Large ribosomal subunit protein eL15 (197 aa).

Residues 175 to 197 form a disordered region; it reads LRTGRKGSSKSRPSIRANGRLRR.

This sequence belongs to the eukaryotic ribosomal protein eL15 family.

This Thermoplasma volcanium (strain ATCC 51530 / DSM 4299 / JCM 9571 / NBRC 15438 / GSS1) protein is Large ribosomal subunit protein eL15 (rpl15e).